The sequence spans 276 residues: Large ribosomal subunit protein uL2 (276 aa).

Positions Gly223–Val276 are disordered. 2 stretches are compositionally biased toward basic and acidic residues: residues Asp230–Gly240 and Arg263–Val276.

Belongs to the universal ribosomal protein uL2 family. In terms of assembly, part of the 50S ribosomal subunit. Forms a bridge to the 30S subunit in the 70S ribosome.

In terms of biological role, one of the primary rRNA binding proteins. Required for association of the 30S and 50S subunits to form the 70S ribosome, for tRNA binding and peptide bond formation. It has been suggested to have peptidyltransferase activity; this is somewhat controversial. Makes several contacts with the 16S rRNA in the 70S ribosome. In Thermotoga maritima (strain ATCC 43589 / DSM 3109 / JCM 10099 / NBRC 100826 / MSB8), this protein is Large ribosomal subunit protein uL2.